The primary structure comprises 507 residues: Dolichyl pyrophosphate Man9GlcNAc2 alpha-1,3-glucosyltransferase (507 aa).

Topologically, residues 1–3 are cytoplasmic; that stretch reads MEK. Residues 4–24 traverse the membrane as a helical segment; sequence WYLMTVVVLIGLTVRWTVSLN. Over 25–114 the chain is Lumenal; it reads SYSGAGKPPM…SQAHKLFMRT (90 aa). An N-linked (GlcNAc...) asparagine glycan is attached at N59. The chain crosses the membrane as a helical span at residues 115–135; sequence TVLIADLLIYIPAVVLYCCCL. The Cytoplasmic portion of the chain corresponds to 136-143; it reads KEISTKKK. The chain crosses the membrane as a helical span at residues 144 to 164; sequence IANALCILLYPGLILIDYGHF. The Lumenal portion of the chain corresponds to 165–172; it reads QYNSVSLG. Residues 173–193 form a helical membrane-spanning segment; sequence FALWGVLGISCDCDLLGSLAF. At 194 to 226 the chain is on the cytoplasmic side; it reads CLAINYKQMELYHALPFFCFLLGKCFKKGLKGK. The helical transmembrane segment at 227-247 threads the bilayer; it reads GFVLLVKLACIVVASFVLCWL. Residues 248–297 lie on the Lumenal side of the membrane; that stretch reads PFFTEREQTLQVLRRLFPVDRGLFEDKVANIWCSFNVFLKIKDILPRHIQ. The chain crosses the membrane as a helical span at residues 298 to 318; that stretch reads LIMSFCFTFLSLLPACIKLIL. Residues 319-323 lie on the Cytoplasmic side of the membrane; sequence QPSSK. The chain crosses the membrane as a helical span at residues 324 to 344; that stretch reads GFKFTLVSCALSFFLFSFQVH. At 345 to 361 the chain is on the lumenal side; sequence EKSILLVSLPVCLVLSE. The chain crosses the membrane as a helical span at residues 362-382; that stretch reads IPFMSTWFLLVSTFSMLPLLL. Over 383–387 the chain is Cytoplasmic; it reads KDELL. The chain crosses the membrane as a helical span at residues 388–408; sequence MPSVVTTMAFFIACVTSFSIF. Residues 409-437 lie on the Lumenal side of the membrane; it reads EKTSEEELQLKSFSISVRKYLPCFTFLSR. The helical transmembrane segment at 438–458 threads the bilayer; it reads IIQYLFLISVITMVLLTLMTV. Over 459–473 the chain is Cytoplasmic; sequence TLGPPQKLPDLFSVL. Residues 474 to 494 form a helical membrane-spanning segment; that stretch reads VCFVSCLNFLFFLVYFNIIIV. Over 495-507 the chain is Lumenal; it reads WDSKSGRNQKKIS.

The protein belongs to the ALG6/ALG8 glucosyltransferase family.

The protein resides in the endoplasmic reticulum membrane. It catalyses the reaction an alpha-D-Man-(1-&gt;2)-alpha-D-Man-(1-&gt;2)-alpha-D-Man-(1-&gt;3)-[alpha-D-Man-(1-&gt;2)-alpha-D-Man-(1-&gt;3)-[alpha-D-Man-(1-&gt;2)-alpha-D-Man-(1-&gt;6)]-alpha-D-Man-(1-&gt;6)]-beta-D-Man-(1-&gt;4)-beta-D-GlcNAc-(1-&gt;4)-alpha-D-GlcNAc-diphospho-di-trans,poly-cis-dolichol + a di-trans,poly-cis-dolichyl beta-D-glucosyl phosphate = an alpha-D-Glc-(1-&gt;3)-alpha-D-Man-(1-&gt;2)-alpha-D-Man-(1-&gt;2)-alpha-D-Man-(1-&gt;3)-[alpha-D-Man-(1-&gt;2)-alpha-D-Man-(1-&gt;3)-[alpha-D-Man-(1-&gt;2)-alpha-D-Man-(1-&gt;6)]-alpha-D-Man-(1-&gt;6)]-beta-D-Man-(1-&gt;4)-beta-D-GlcNAc-(1-&gt;4)-alpha-D-GlcNAc-diphospho-di-trans,poly-cis-dolichol + a di-trans,poly-cis-dolichyl phosphate + H(+). The protein operates within protein modification; protein glycosylation. Dolichyl pyrophosphate Man9GlcNAc2 alpha-1,3-glucosyltransferase that operates in the biosynthetic pathway of dolichol-linked oligosaccharides, the glycan precursors employed in protein asparagine (N)-glycosylation. The assembly of dolichol-linked oligosaccharides begins on the cytosolic side of the endoplasmic reticulum membrane and finishes in its lumen. The sequential addition of sugars to dolichol pyrophosphate produces dolichol-linked oligosaccharides containing fourteen sugars, including two GlcNAcs, nine mannoses and three glucoses. Once assembled, the oligosaccharide is transferred from the lipid to nascent proteins by oligosaccharyltransferases. In the lumen of the endoplasmic reticulum, adds the first glucose residue from dolichyl phosphate glucose (Dol-P-Glc) onto the lipid-linked oligosaccharide intermediate Man(9)GlcNAc(2)-PP-Dol to produce Glc(1)Man(9)GlcNAc(2)-PP-Dol. Glc(1)Man(9)GlcNAc(2)-PP-Dol is a substrate for ALG8, the following enzyme in the biosynthetic pathway. The polypeptide is Dolichyl pyrophosphate Man9GlcNAc2 alpha-1,3-glucosyltransferase (Pongo abelii (Sumatran orangutan)).